A 1078-amino-acid polypeptide reads, in one-letter code: Cell wall acid trehalase ATC1 (1078 aa).

A signal peptide spans 1 to 54 (MAANSSFFLADNCAPHNQSFIQFCIHAASKKKGRIALMCLANLFLLFSFHLLYA). N4, N17, N150, N184, N242, N287, N301, and N350 each carry an N-linked (GlcNAc...) asparagine glycan. 478–479 (WD) contributes to the substrate binding site. 3 N-linked (GlcNAc...) asparagine glycosylation sites follow: N532, N591, and N601. E607 serves as the catalytic Proton donor. 2 N-linked (GlcNAc...) asparagine glycosylation sites follow: N661 and N670. 676-677 (KQ) is a substrate binding site. N-linked (GlcNAc...) asparagine glycosylation is found at N829, N837, N904, N922, N931, N946, N1003, and N1037.

It belongs to the glycosyl hydrolase 65 family.

The protein resides in the secreted. It localises to the cell wall. It carries out the reaction alpha,alpha-trehalose + H2O = alpha-D-glucose + beta-D-glucose. Cell wall acid trehalase that catalyzes hydrolysis of the disaccharide trehalose and required for growth on trehalose as carbon source. Plays a role in dimorphic conversion and virulence. This is Cell wall acid trehalase ATC1 (ATC1) from Candida albicans (strain SC5314 / ATCC MYA-2876) (Yeast).